A 364-amino-acid chain; its full sequence is 3'(2'),5'-bisphosphate nucleotidase 1 (364 aa).

D54 functions as the Proton acceptor in the catalytic mechanism. Positions 77, 141, 143, and 144 each coordinate Mg(2+). T146 serves as the catalytic Proton acceptor. Adenosine 3',5'-bisphosphate is bound by residues T146, H243, S272, K275, R289, and D302. Residues H243, S272, K275, R289, and D302 each coordinate AMP. D302 provides a ligand contact to Mg(2+).

The protein belongs to the inositol monophosphatase superfamily. The cofactor is Mg(2+).

It catalyses the reaction 3'-phosphoadenylyl sulfate + H2O = adenosine 5'-phosphosulfate + phosphate. The enzyme catalyses adenosine 3',5'-bisphosphate + H2O = AMP + phosphate. It carries out the reaction adenosine 2',5'-bisphosphate + H2O = AMP + phosphate. Phosphatase that converts adenosine 3'-phosphate 5'-phosphosulfate (PAPS) to adenosine 5'-phosphosulfate (APS) and 3'(2')-phosphoadenosine 5'-phosphate (PAP) to AMP. Regulates the flux of sulfur in the sulfur-activation pathway by converting PAPS to APS. Involved in salt tolerance. The polypeptide is 3'(2'),5'-bisphosphate nucleotidase 1 (HAL21) (Candida albicans (strain SC5314 / ATCC MYA-2876) (Yeast)).